We begin with the raw amino-acid sequence, 221 residues long: GTP-binding nuclear protein Ran-1 (221 aa).

Residues 10–174 enclose the Small GTPase Ran-type domain; the sequence is DYPSFKLVIV…LYLARKLAGD (165 aa). 21 to 28 contributes to the GTP binding site; sequence DGGTGKTT. The interval 40–48 is switch-I; it reads KKYEPTIGV. Residues Gly-71, 125 to 128, and 153 to 155 contribute to the GTP site; these read NKVD and SAK. The tract at residues 71 to 87 is switch-II; it reads GQEKFGGLRDGYYIHGQ.

This sequence belongs to the small GTPase superfamily. Ran family. Found in a nuclear export complex with RanGTP, exportin and pre-miRNA. Interacts with RANBP1A and RANBP1B. Interacts with TRN1. Interacts with ATX1. Interacts with KPNB1. Binds to XPO1. Interacts with MOS14. Binds to NTF2B.

The protein resides in the nucleus. In terms of biological role, GTP-binding protein involved in nucleocytoplasmic transport. Required for the import of protein into the nucleus and also for RNA export. Involved in chromatin condensation and control of cell cycle. The protein is GTP-binding nuclear protein Ran-1 (RAN1) of Arabidopsis thaliana (Mouse-ear cress).